A 395-amino-acid polypeptide reads, in one-letter code: Calreticulin (395 aa).

The N-terminal stretch at 1 to 15 is a signal peptide; that stretch reads MKSLCLLAIVAVVSA. Cysteine 101 and cysteine 133 are joined by a disulfide. Tyrosine 105, lysine 107, tyrosine 124, and aspartate 131 together coordinate an alpha-D-glucoside. A run of 7 repeats spans residues 186–197, 205–216, 222–233, 239–250, 254–264, 268–278, and 282–292. Residues 186–250 form a 4 X approximate repeats region; it reads AQTGSLEEDW…DAKKPEDWDD (65 aa). The tract at residues 193-301 is P-domain; the sequence is EDWDLLPAKK…PEYTPDDELY (109 aa). Residues 202-212 are compositionally biased toward basic and acidic residues; sequence KIKDPDAKKPE. The interval 202–255 is disordered; that stretch reads KIKDPDAKKPEDWDEREYIDDAEDAKPEDWEKPEHIPDPDAKKPEDWDDEMDGE. A compositionally biased stretch (acidic residues) spans 213–224; the sequence is DWDEREYIDDAE. The segment covering 225–246 has biased composition (basic and acidic residues); that stretch reads DAKPEDWEKPEHIPDPDAKKPE. Residues 254 to 292 form a 3 X approximate repeats region; the sequence is GEWEPPMIDNPEYKGEWKPKQIKNPAYKGKWIHPEIENP. Residues 302–395 form a C-domain region; it reads SYESWGAIGF…KEEEEGHDEL (94 aa). Residue aspartate 312 coordinates an alpha-D-glucoside. Positions 340-380 are enriched in basic and acidic residues; sequence ETFDKLKTVEKEKKEKADEETRKAEEEARKKAEEEKEAKKD. Residues 340–395 form a disordered region; it reads ETFDKLKTVEKEKKEKADEETRKAEEEARKKAEEEKEAKKDDDEEEKEEEEGHDEL. Acidic residues predominate over residues 381–395; that stretch reads DDEEEKEEEEGHDEL. Positions 392–395 match the Prevents secretion from ER motif; that stretch reads HDEL.

The protein belongs to the calreticulin family. Cleaved by caspase ced-3 in vitro.

It is found in the endoplasmic reticulum lumen. Its function is as follows. Molecular calcium-binding chaperone promoting folding, oligomeric assembly and quality control in the endoplasmic reticulum (ER) via the calreticulin/calnexin cycle. This lectin may interact transiently with almost all of the monoglucosylated glycoproteins that are synthesized in the ER. Probably by controlling the folding of extracellular matrix protein unc-52/Perlecan, may play a role in the formation of fibrous organelles, a hemidesmosome-like structure attaching muscles to the epidermis. Protects dopaminergic neurons against oxidative stress-induced neurodegeneration. May play a role in protection against ER stress. Plays a role in modulating lifespan, acting by influencing ER calcium homeostasis. In Caenorhabditis elegans, this protein is Calreticulin (crt-1).